A 440-amino-acid polypeptide reads, in one-letter code: Xylose isomerase (440 aa).

Mg(2+) is bound by residues aspartate 307 and aspartate 309.

This sequence belongs to the xylose isomerase family. In terms of assembly, homotetramer. Requires Mg(2+) as cofactor.

It localises to the cytoplasm. It carries out the reaction alpha-D-xylose = alpha-D-xylulofuranose. This chain is Xylose isomerase, found in Escherichia coli (strain K12 / MC4100 / BW2952).